The primary structure comprises 696 residues: Two-component response regulator ORR22 (696 aa).

In terms of domain architecture, Response regulatory spans 27–142 (RVLAVDDDPV…ELRNIWQHVV (116 aa)). D78 carries the post-translational modification 4-aspartylphosphate. The segment at 154-214 (LDFSKECNKP…DYQENDEPSA (61 aa)) is disordered. Polar residues predominate over residues 176 to 185 (TCGSSDQNGR). Acidic residues predominate over residues 195 to 211 (GEDDDEGDDNDYQENDE). Residues 214-273 (AAKKPRVVWSVELHRKFVAAVNQLGIDKAVPKRILELMNVEKLTRENVASHLQKYRLYLK) constitute a DNA-binding region (myb-like GARP).

Belongs to the ARR family. Type-B subfamily. In terms of processing, two-component system major event consists of a His-to-Asp phosphorelay between a sensor histidine kinase (HK) and a response regulator (RR). In plants, the His-to-Asp phosphorelay involves an additional intermediate named Histidine-containing phosphotransfer protein (HPt). This multistep phosphorelay consists of a His-Asp-His-Asp sequential transfer of a phosphate group between first a His and an Asp of the HK protein, followed by the transfer to a conserved His of the HPt protein and finally the transfer to an Asp in the receiver domain of the RR protein.

Its subcellular location is the nucleus. Transcriptional activator that binds specific DNA sequence. Functions as a response regulator involved in His-to-Asp phosphorelay signal transduction system. Phosphorylation of the Asp residue in the receiver domain activates the ability of the protein to promote the transcription of target genes. May directly activate some type-A response regulators in response to cytokinins. Functions as a response regulator in response to cytokinins. The chain is Two-component response regulator ORR22 from Oryza sativa subsp. japonica (Rice).